Here is a 333-residue protein sequence, read N- to C-terminus: Adenosine deaminase (333 aa).

2 residues coordinate Zn(2+): histidine 12 and histidine 14. The substrate site is built by histidine 14, aspartate 16, and glycine 170. Histidine 197 contributes to the Zn(2+) binding site. Glutamate 200 functions as the Proton donor in the catalytic mechanism. Residue aspartate 278 participates in Zn(2+) binding. Residue aspartate 279 participates in substrate binding.

Belongs to the metallo-dependent hydrolases superfamily. Adenosine and AMP deaminases family. Adenosine deaminase subfamily. Requires Zn(2+) as cofactor.

The catalysed reaction is adenosine + H2O + H(+) = inosine + NH4(+). It catalyses the reaction 2'-deoxyadenosine + H2O + H(+) = 2'-deoxyinosine + NH4(+). Its function is as follows. Catalyzes the hydrolytic deamination of adenosine and 2-deoxyadenosine. This chain is Adenosine deaminase, found in Photorhabdus laumondii subsp. laumondii (strain DSM 15139 / CIP 105565 / TT01) (Photorhabdus luminescens subsp. laumondii).